The chain runs to 706 residues: Transcription factor 12 (706 aa).

The interval 25-109 is disordered; sequence AMFSPPVNSG…TPFMNSNLIG (85 aa). Composition is skewed to polar residues over residues 30–48 and 56–76; these read PVNS…QFSG and GTTS…SRGF. Residues Ser47, Ser67, and Ser79 each carry the phosphoserine modification. Over residues 81–93 the composition is skewed to basic and acidic residues; that stretch reads HYSDHLNDSRLGT. Residue Ser98 is modified to Phosphoserine. Residue Lys110 forms a Glycyl lysine isopeptide (Lys-Gly) (interchain with G-Cter in SUMO2) linkage. Phosphoserine occurs at positions 116 and 124. The interval 119-140 is leucine-zipper; sequence LYSRDSGLSGCQSSLLRQDLGL. 2 disordered regions span residues 140–222 and 249–313; these read LGSP…SMFA and FGGI…ASHT. Residues 144 to 163 show a composition bias toward polar residues; that stretch reads AQLSSSGKPGTPYYSFSATS. A Glycyl lysine isopeptide (Lys-Gly) (interchain with G-Cter in SUMO2) cross-link involves residue Lys181. Positions 181–188 match the Nuclear localization signal motif; sequence KKVRKVPP. A compositionally biased stretch (low complexity) spans 256–269; that stretch reads STSHMSQSSSYGSL. The segment covering 282–306 has biased composition (polar residues); the sequence is VSPTDINTSLPPMSSFHRGSTSSSP. Residue Thr313 is modified to Phosphothreonine. A Phosphoserine modification is found at Ser333. Disordered stretches follow at residues 349–392 and 520–604; these read PDHT…YENS and HKTP…ERRM. A compositionally biased stretch (low complexity) spans 352–363; the sequence is TSSSFPSNPSTP. Composition is skewed to polar residues over residues 364-376 and 383-392; these read VGSP…TSQW and APSSPSYENS. Ser392 carries the post-translational modification Phosphoserine. Composition is skewed to basic and acidic residues over residues 542–554 and 560–575; these read IKTE…ENLH and DDMK…DIKV. Residue Lys543 forms a Glycyl lysine isopeptide (Lys-Gly) (interchain with G-Cter in SUMO2) linkage. Ser564 carries the post-translational modification Phosphoserine. Lys574 participates in a covalent cross-link: Glycyl lysine isopeptide (Lys-Gly) (interchain with G-Cter in SUMO2). A Phosphothreonine modification is found at Thr581. Ser582 and Ser583 each carry phosphoserine. The segment covering 592–604 has biased composition (basic and acidic residues); the sequence is PEQKIEREKERRM. A bHLH domain is found at 601 to 654; the sequence is ERRMANNARERLRVRDINEAFKELGRMCQLHLKSEKPQTKLLILHQAVAVILSL. Residues Lys633 and Lys677 each participate in a glycyl lysine isopeptide (Lys-Gly) (interchain with G-Cter in SUMO2) cross-link. Residues 656–679 are class A specific domain; that stretch reads QQVRERNLNPKAACLKRREEEKVS. The segment at 674–706 is disordered; sequence EEEKVSAASAEPPNTLPGAHPGLSESTNPMGHL. Positions 697–706 are enriched in polar residues; the sequence is SESTNPMGHL.

Efficient DNA binding requires dimerization with another bHLH protein. Forms homo- or heterooligomers with myogenin, E12 and ITF2 proteins and RUNX1T1. Interacts with PTF1A. Interacts with NEUROD2. Interacts with BHLHA9. Widely expressed.

Its subcellular location is the nucleus. Transcriptional regulator. Involved in the initiation of neuronal differentiation. Activates transcription by binding to the E box (5'-CANNTG-3'). May be involved in the functional network that regulates the development of the GnRH axis. The protein is Transcription factor 12 (Tcf12) of Mus musculus (Mouse).